Reading from the N-terminus, the 66-residue chain is Conotoxin Lt3.5 (66 aa).

Positions 1-20 (MMSKLGALLTICLLLFPLTA) are cleaved as a signal peptide. Positions 21-53 (VPLDGDQPLDRHAERMHDGISPKRHPWFDPVKR) are excised as a propeptide. 3 disulfide bridges follow: Cys54/Cys66, Cys55/Cys62, and Cys59/Cys65. Pro64 carries the post-translational modification 4-hydroxyproline.

This sequence belongs to the conotoxin M superfamily. In terms of tissue distribution, expressed by the venom duct.

It localises to the secreted. The polypeptide is Conotoxin Lt3.5 (Conus litteratus (Lettered cone)).